A 120-amino-acid chain; its full sequence is uncharacterized protein (120 aa).

2 helical membrane passes run 8 to 28 (PFVT…CTLV) and 55 to 75 (FLEN…IGIL).

It localises to the membrane. This is an uncharacterized protein from Saccharomyces cerevisiae (strain ATCC 204508 / S288c) (Baker's yeast).